The sequence spans 340 residues: Protein-arginine kinase (340 aa).

In terms of domain architecture, Phosphagen kinase C-terminal spans 21–242 (VVLSSRIRLA…EQIIMQERVA (222 aa)). ATP-binding positions include 24–28 (SSRIR), H79, R113, 164–168 (RASVM), and 195–200 (RGIYGE).

It belongs to the ATP:guanido phosphotransferase family.

It carries out the reaction L-arginyl-[protein] + ATP = N(omega)-phospho-L-arginyl-[protein] + ADP + H(+). Catalyzes the specific phosphorylation of arginine residues in proteins. The sequence is that of Protein-arginine kinase from Listeria monocytogenes serotype 4b (strain F2365).